Here is a 910-residue protein sequence, read N- to C-terminus: Dimethylsulfide dehydrogenase subunit alpha (910 aa).

Residues M1–A28 constitute a signal peptide (tat-type signal). The 4Fe-4S Mo/W bis-MGD-type domain occupies D59–D123. Positions 66, 70, 74, and 109 each coordinate [4Fe-4S] cluster.

It belongs to the prokaryotic molybdopterin-containing oxidoreductase family. As to quaternary structure, heterotrimer of alpha, beta and gamma subunits. [4Fe-4S] cluster serves as cofactor. Mo-bis(molybdopterin guanine dinucleotide) is required as a cofactor. In terms of processing, predicted to be exported by the Tat system. The position of the signal peptide cleavage has been experimentally proven.

The protein resides in the periplasm. It catalyses the reaction 2 Fe(III)-[cytochrome c2] + dimethyl sulfide + H2O = 2 Fe(II)-[cytochrome c2] + dimethyl sulfoxide + 2 H(+). In terms of biological role, allows photoautotrophic growth on dimethyl sulfide (DMS) as the sole electron donor. The polypeptide is Dimethylsulfide dehydrogenase subunit alpha (ddhA) (Rhodovulum sulfidophilum (Rhodobacter sulfidophilus)).